Here is a 238-residue protein sequence, read N- to C-terminus: MHFIPKLFPAKLIRRYKRFLADVKQDDQHIFTVSVPNTGSMLGLTASNANIWLSYHENTKRKYAYQLEIVEADNTLVGINTTLPNKLVLEAIQNGLLPELSGYKTILKEQRYGTQSRIDFLLRDDNLPDCYLEVKNVHFIRQKGLAEFPDTETKRGARHLEELMHVVQQGKRAAMLYIIQREDCTAFTICHDLDPLYGRKFDLALKSGVECYAIKCHISVEGIFPIQRVKIENRRNND.

The protein belongs to the SfsA family.

This chain is Sugar fermentation stimulation protein homolog, found in Bartonella tribocorum (strain CIP 105476 / IBS 506).